The primary structure comprises 429 residues: MRAVYAILAGLLATGSASPLEARQSGNPFVGRSLFVNPKYSESLERTRQAFLSRGDQTNAAKVQYVQNKVGTFVWISNIFLLRDIDDAIRNARAAQSRGEKPIVGLVLYNLPDRDCSAGHSSGELSLDQNGLNRYRTEYVQPFAQKLKAASDLQFAVILEPDAIGNMVTGTTAFCRNARGPQQDGIAYAIQQLQASNIHLYLDVANGGWLGWADNLKPTTILQKAGSNARIRGYSSNVSNYNPYSTNNPPPYTAGSPSADESRYATSLGNALRERGLPTNFIIDQGRVALDGARKEWGEWCNVSPAGFGQPFTTNTNNPNVDAILWVKPGGESDGTCGMSGAPQAGAWFDAYAQMLTTNAHPEIRADGGGGGSPAPGPSSTAVAPSPSATPGGNCAARWAQCGGQGWTGPTCCAQGTCQASNQWYSQCL.

A signal peptide spans Met1–Ala17. Residues Trp75 and Ser77 each coordinate substrate. Residues Asp115 and Asp162 each act as proton donor in the active site. Substrate-binding residues include Asn206 and Trp209. Residue Asn237 is glycosylated (N-linked (GlcNAc...) asparagine). Substrate contacts are provided by Asn240, Trp300, Lys328, and Glu332. Residues Asn240–Glu261 are disordered. The segment at Pro362 to Thr390 is disordered. Residues Pro378 to Thr390 are compositionally biased toward low complexity. The CBM1 domain maps to Asn394–Leu429.

This sequence belongs to the glycosyl hydrolase 6 (cellulase B) family.

It is found in the secreted. Probable exoglucanase that may play an important function in biomass degradation by catalyzing the hydrolysis of cellulose. The sequence is that of Probable exoglucanase GH6D from Podospora anserina (strain S / ATCC MYA-4624 / DSM 980 / FGSC 10383) (Pleurage anserina).